Here is a 184-residue protein sequence, read N- to C-terminus: Photosystem I assembly protein Ycf4 (184 aa).

Transmembrane regions (helical) follow at residues 19–39 (ISNL…VLVG) and 57–77 (IIFF…LFIS).

This sequence belongs to the Ycf4 family.

Its subcellular location is the plastid thylakoid membrane. Functionally, seems to be required for the assembly of the photosystem I complex. In Cuscuta reflexa (Southern Asian dodder), this protein is Photosystem I assembly protein Ycf4.